Consider the following 513-residue polypeptide: GMP synthase [glutamine-hydrolyzing] (513 aa).

The 190-residue stretch at 9–198 (LILVLDFGSQ…IREICKCTGE (190 aa)) folds into the Glutamine amidotransferase type-1 domain. Cys86 serves as the catalytic Nucleophile. Catalysis depends on residues His172 and Glu174. The GMPS ATP-PPase domain maps to 199–388 (WTMENFIEIE…LGIPEHLVWR (190 aa)). Residue 226–232 (SGGVDSS) coordinates ATP.

In terms of assembly, homodimer.

The enzyme catalyses XMP + L-glutamine + ATP + H2O = GMP + L-glutamate + AMP + diphosphate + 2 H(+). It functions in the pathway purine metabolism; GMP biosynthesis; GMP from XMP (L-Gln route): step 1/1. Its function is as follows. Catalyzes the synthesis of GMP from XMP. The chain is GMP synthase [glutamine-hydrolyzing] from Macrococcus caseolyticus (strain JCSC5402) (Macrococcoides caseolyticum).